Reading from the N-terminus, the 72-residue chain is MAIQSKYSNTQVESLITELLAVLEKHQSPTDLSLMALGNCVTHLLQNKVPAEAREVVTEQFAKALSQSVKNS.

Belongs to the UPF0352 family.

This Shewanella piezotolerans (strain WP3 / JCM 13877) protein is UPF0352 protein swp_2271.